Consider the following 224-residue polypeptide: uncharacterized protein (224 aa).

This is an uncharacterized protein from Saccharomyces cerevisiae (strain ATCC 204508 / S288c) (Baker's yeast).